A 179-amino-acid chain; its full sequence is Translationally-controlled tumor protein homolog (179 aa).

Residues 1–179 enclose the TCTP domain; that stretch reads MIIYKDIISG…WKHGLEEMKV (179 aa).

It belongs to the TCTP family.

The protein localises to the cytoplasm. It is found in the cytoskeleton. Functionally, involved in protein synthesis. Involved in microtubule stabilization. The chain is Translationally-controlled tumor protein homolog from Aspergillus fumigatus (strain ATCC MYA-4609 / CBS 101355 / FGSC A1100 / Af293) (Neosartorya fumigata).